A 1433-amino-acid polypeptide reads, in one-letter code: Probable serine/threonine-protein kinase DDB_G0277989 (1433 aa).

ATP contacts are provided by residues 1–4 (MNEI) and lysine 41. Residues 1–272 (MNEIIVGEYK…EFDDFTHPLS (272 aa)) form the Protein kinase 1 domain. Aspartate 151 (proton acceptor) is an active-site residue. 2 stretches are compositionally biased toward low complexity: residues 332–362 (NNNN…NNNN) and 533–550 (TATT…TTTA). Disordered regions lie at residues 332 to 366 (NNNN…SDGP) and 521 to 550 (PSSE…TTTA). In terms of domain architecture, Protein kinase 2 spans 1177–1433 (IYDKRYYIQK…QPHVCKSFKK (257 aa)).

Belongs to the protein kinase superfamily. Ser/Thr protein kinase family.

It carries out the reaction L-seryl-[protein] + ATP = O-phospho-L-seryl-[protein] + ADP + H(+). It catalyses the reaction L-threonyl-[protein] + ATP = O-phospho-L-threonyl-[protein] + ADP + H(+). The chain is Probable serine/threonine-protein kinase DDB_G0277989 from Dictyostelium discoideum (Social amoeba).